Consider the following 702-residue polypeptide: Polyribonucleotide nucleotidyltransferase (702 aa).

Residues D485 and D491 each coordinate Mg(2+). The KH domain occupies 552–611 (PKTSTLQIDPEKIRDVIGAGGKVINKIIADTGVKIDIKEDGLVYVSSAESEGVKEAVKII). The region spanning 621-689 (GEIYLGKVTK…SQGRINLSRK (69 aa)) is the S1 motif domain.

It belongs to the polyribonucleotide nucleotidyltransferase family. Mg(2+) is required as a cofactor.

It is found in the cytoplasm. The enzyme catalyses RNA(n+1) + phosphate = RNA(n) + a ribonucleoside 5'-diphosphate. Involved in mRNA degradation. Catalyzes the phosphorolysis of single-stranded polyribonucleotides processively in the 3'- to 5'-direction. This chain is Polyribonucleotide nucleotidyltransferase, found in Clostridium perfringens (strain 13 / Type A).